The chain runs to 157 residues: Crossover junction endodeoxyribonuclease RuvC (157 aa).

Catalysis depends on residues Asp7, Glu67, and Asp140. The Mg(2+) site is built by Asp7, Glu67, and Asp140.

It belongs to the RuvC family. As to quaternary structure, homodimer which binds Holliday junction (HJ) DNA. The HJ becomes 2-fold symmetrical on binding to RuvC with unstacked arms; it has a different conformation from HJ DNA in complex with RuvA. In the full resolvosome a probable DNA-RuvA(4)-RuvB(12)-RuvC(2) complex forms which resolves the HJ. Mg(2+) serves as cofactor.

It localises to the cytoplasm. It catalyses the reaction Endonucleolytic cleavage at a junction such as a reciprocal single-stranded crossover between two homologous DNA duplexes (Holliday junction).. Its function is as follows. The RuvA-RuvB-RuvC complex processes Holliday junction (HJ) DNA during genetic recombination and DNA repair. Endonuclease that resolves HJ intermediates. Cleaves cruciform DNA by making single-stranded nicks across the HJ at symmetrical positions within the homologous arms, yielding a 5'-phosphate and a 3'-hydroxyl group; requires a central core of homology in the junction. The consensus cleavage sequence is 5'-(A/T)TT(C/G)-3'. Cleavage occurs on the 3'-side of the TT dinucleotide at the point of strand exchange. HJ branch migration catalyzed by RuvA-RuvB allows RuvC to scan DNA until it finds its consensus sequence, where it cleaves and resolves the cruciform DNA. The sequence is that of Crossover junction endodeoxyribonuclease RuvC from Rickettsia prowazekii (strain Madrid E).